We begin with the raw amino-acid sequence, 186 residues long: UPF0669 protein C6orf120 homolog (186 aa).

Positions 1 to 19 are cleaved as a signal peptide; the sequence is MVPFWAGLLVLSALPQTLG. Asn47 carries N-linked (GlcNAc...) asparagine glycosylation. The disordered stretch occupies residues 141–165; it reads KNSYSSDETPGQPRQSQGPEDTEEE. Over residues 142–159 the composition is skewed to polar residues; it reads NSYSSDETPGQPRQSQGP.

Belongs to the UPF0669 family.

It is found in the secreted. The sequence is that of UPF0669 protein C6orf120 homolog from Danio rerio (Zebrafish).